A 451-amino-acid chain; its full sequence is Heme sensor protein HssS (451 aa).

The next 2 membrane-spanning stretches (helical) occupy residues 9-29 (IAIY…LFTN) and 164-184 (IFLA…VIAS). The 53-residue stretch at 186-238 (YSIIKPVTALKNATTRIMKGDFSTPIKQTRHDEIGTLQSRFNTMRQNLGQVDQ) folds into the HAMP domain. Positions 246–451 (NVSHEIKTPL…KTQFIVKLFI (206 aa)) constitute a Histidine kinase domain. A Phosphohistidine; by autocatalysis modification is found at His-249.

Autophosphorylated.

The protein resides in the cell membrane. The enzyme catalyses ATP + protein L-histidine = ADP + protein N-phospho-L-histidine.. In terms of biological role, member of the two-component regulatory system HssS/HssR involved in intracellular heme homeostasis and tempering of staphylococcal virulence. HssS functions as a heme sensor histidine kinase which is autophosphorylated at a histidine residue and transfers its phosphate group to an aspartate residue of HssR. HssR/HssS activates the expression of HrtAB, an efflux pump, in response to extracellular heme, hemin, hemoglobin or blood. The chain is Heme sensor protein HssS (hssS) from Staphylococcus epidermidis (strain ATCC 12228 / FDA PCI 1200).